Reading from the N-terminus, the 316-residue chain is Glutathione synthetase (316 aa).

In terms of domain architecture, ATP-grasp spans 125-310 (KLFTAWFSDL…ITGMLMDAIE (186 aa)). An ATP-binding site is contributed by 151–207 (WEKHSDIILKPLDGMGGASIFRVKEGDPNLGVIAETLTEHGTCYCMAQNYLPAIKDG). Positions 281 and 283 each coordinate Mg(2+).

This sequence belongs to the prokaryotic GSH synthase family. Mg(2+) serves as cofactor. Mn(2+) is required as a cofactor.

The catalysed reaction is gamma-L-glutamyl-L-cysteine + glycine + ATP = glutathione + ADP + phosphate + H(+). It functions in the pathway sulfur metabolism; glutathione biosynthesis; glutathione from L-cysteine and L-glutamate: step 2/2. In Shigella flexneri, this protein is Glutathione synthetase.